Consider the following 284-residue polypeptide: Acetylglutamate kinase (284 aa).

Residues 64–65 (GG), Arg86, and Asn179 each bind substrate.

Belongs to the acetylglutamate kinase family. ArgB subfamily.

It localises to the cytoplasm. It carries out the reaction N-acetyl-L-glutamate + ATP = N-acetyl-L-glutamyl 5-phosphate + ADP. Its pathway is amino-acid biosynthesis; L-arginine biosynthesis; N(2)-acetyl-L-ornithine from L-glutamate: step 2/4. Catalyzes the ATP-dependent phosphorylation of N-acetyl-L-glutamate. The protein is Acetylglutamate kinase of Acaryochloris marina (strain MBIC 11017).